The following is a 118-amino-acid chain: Small ribosomal subunit protein uS13 (118 aa).

The interval 91-118 is disordered; it reads HRRGLPVRGQRTRTNARTRKGPRRPIKK.

It belongs to the universal ribosomal protein uS13 family. Part of the 30S ribosomal subunit. Forms a loose heterodimer with protein S19. Forms two bridges to the 50S subunit in the 70S ribosome.

Located at the top of the head of the 30S subunit, it contacts several helices of the 16S rRNA. In the 70S ribosome it contacts the 23S rRNA (bridge B1a) and protein L5 of the 50S subunit (bridge B1b), connecting the 2 subunits; these bridges are implicated in subunit movement. Contacts the tRNAs in the A and P-sites. This Methylococcus capsulatus (strain ATCC 33009 / NCIMB 11132 / Bath) protein is Small ribosomal subunit protein uS13.